An 801-amino-acid polypeptide reads, in one-letter code: MLVSYKWLKELVDIDVPSHELAEKMSTTGIEVEGVDVPAEGLSKLVVGHVLSCEDVPETHLHLCQVDTGEEESRQIVCGAPNITAGIKVIVALPGARIADNYKIKKGKIRGMESLGMICSLQELGLPDSIIPKEYSDGIQILPEDAVPGESIFPYLDLDDEIIELSITPNRADALSMRGVAHEVAAIYDKSVHFEDKVLTESDKKAADLIKVAIASDKVLTYKARVVENVTIKPSPQWLQNLLMNAGIRPINNVVDVTNYVLLYFGQPMHAFDLDKFEGKDILARQAKAGEKLVTLDGEARDLIEEDLVITVADKPVALAGVMGGAATEIDASSKNVVLEAAVFDGKSVRKTSSRLNLRSESSSRFEKGVNYADVVKALDFAAAMLTELADGTVLAGQVSAGAVPTDDIQVSTSLDYVNVRLGTDLVFSDIESVFARLGFGLSGNDEKFTVSVPRRRWDISIQADLVEEIARIYGYDKLPTTLPEAAGTVGELTKTQKLRRKIRNLAEGSGLSEIISYALTTPEKAVAFTPNPTKITELMWPMTVDRSALRQNIVSGMLDTIAYNVARKSNNLALYEIGKVFEQTADPKKDLPKEIDTFAFALTGLVTEKDFQTAATPVDFFYAKGVLEAILAKLEITVQFVATKEMANMHPGRTALIERDGQVIGYLGQVHPQTAKLYDIPETYVAEVNLNALEAALKSDLVFEDITKFPAVSRDIALLLSEKVSHQDILDAIAASGVKRLIKVKLFDVYAGEKLGVGKKSMAYSLTFQNPNDNLTDEEVAKYMEKITSALTEKVGAEVR.

The region spanning 39–153 is the tRNA-binding domain; that stretch reads AEGLSKLVVG…EDAVPGESIF (115 aa). The B5 domain occupies 406–481; it reads TDDIQVSTSL…RIYGYDKLPT (76 aa). Asp459, Asp465, Glu468, and Glu469 together coordinate Mg(2+). In terms of domain architecture, FDX-ACB spans 708-801; sequence TKFPAVSRDI…LTEKVGAEVR (94 aa).

Belongs to the phenylalanyl-tRNA synthetase beta subunit family. Type 1 subfamily. As to quaternary structure, tetramer of two alpha and two beta subunits. Mg(2+) is required as a cofactor.

It localises to the cytoplasm. It carries out the reaction tRNA(Phe) + L-phenylalanine + ATP = L-phenylalanyl-tRNA(Phe) + AMP + diphosphate + H(+). This is Phenylalanine--tRNA ligase beta subunit from Streptococcus mutans serotype c (strain ATCC 700610 / UA159).